Consider the following 121-residue polypeptide: MEAKASARYIRVTPMKARRVVNLIRGQQANEALAILKFAPQAASEPVFKVLESAVANARQKADREGLAFKPEDLVVSAAFVDEGPTMKRFQPRAQGRAFRINKRTSHVTVVVATPEKEEVR.

This sequence belongs to the universal ribosomal protein uL22 family. Part of the 50S ribosomal subunit.

Functionally, this protein binds specifically to 23S rRNA; its binding is stimulated by other ribosomal proteins, e.g. L4, L17, and L20. It is important during the early stages of 50S assembly. It makes multiple contacts with different domains of the 23S rRNA in the assembled 50S subunit and ribosome. Its function is as follows. The globular domain of the protein is located near the polypeptide exit tunnel on the outside of the subunit, while an extended beta-hairpin is found that lines the wall of the exit tunnel in the center of the 70S ribosome. The sequence is that of Large ribosomal subunit protein uL22 from Kocuria rhizophila (strain ATCC 9341 / DSM 348 / NBRC 103217 / DC2201).